We begin with the raw amino-acid sequence, 250 residues long: Triosephosphate isomerase (250 aa).

Substrate-binding residues include N10 and K12. The active-site Electrophile is H94. The Proton acceptor role is filled by E167.

It belongs to the triosephosphate isomerase family. As to quaternary structure, homodimer.

It localises to the cytoplasm. It carries out the reaction D-glyceraldehyde 3-phosphate = dihydroxyacetone phosphate. The protein operates within carbohydrate biosynthesis; gluconeogenesis. Its pathway is carbohydrate degradation; glycolysis; D-glyceraldehyde 3-phosphate from glycerone phosphate: step 1/1. This chain is Triosephosphate isomerase, found in Taenia solium (Pork tapeworm).